A 755-amino-acid chain; its full sequence is MEAVIEKECSALGGLFQTIISDMKGSYPVWEDFINKAGKLQSQLRTTVVAAAAFLDAFQKVADMATNTRGGTREIGSALTRMCMRHRSIEAKLRQFSSALIDCLINPLQEQMEEWKKVANQLDKDHAKEYKKARQEIKKKSSDTLKLQKKAKKGRGDIQPQLDSALQDVNDKYLLLEETEKQAVRKALIEERGRFCTFISMLRPVIEEEISMLGEITHLQTISEDLKSLTMDPHKLPSSSEQVILDLKGSDYSWSYQTPPSSPSTTMSRKSSVCSSLNSVNSSDSRSSGSHSHSPSSHYRYRSSNLAQQAPVRLSSVSSHDSGFISQDAFQSKSPSPMPPEAPNQLSNGFSHYSLSSESHVGPTGAGLFPHCLPASRLLPRVTSVHLPDYAHYYTIGPGMFPSSQIPSWKDWAKPGPYDQPLVNTLQRRKEKREPDPNGGGPTTASGPPAAAEEAQRPRSMTVSAATRPGEEMEACEELALALSRGLQLDTQRSSRDSLQCSSGYSTQTTTPCCSEDTIPSQVSDYDYFSVSGDQEADQQEFDKSSTIPRNSDISQSYRRMFQAKRPASTAGLPTTLGPAMVTPGVATIRRTPSTKPSVRRGTIGAGPIPIKTPVIPVKTPTVPDLPGVLPAPPDGPEERGEHSPESPSVGEGPQGVTSMPSSMWSGQASVNPPLPGPKPSIPEEHRQAIPESEAEDQEREPPSATVSPGQIPESDPADLSPRDTPQGEDMLNAIRRGVKLKKTTTNDRSAPRFS.

In terms of domain architecture, IMD spans 1–250; sequence MEAVIEKECS…EQVILDLKGS (250 aa). A coiled-coil region spans residues 108 to 155; it reads LQEQMEEWKKVANQLDKDHAKEYKKARQEIKKKSSDTLKLQKKAKKGR. 2 disordered regions span residues 139 to 159 and 255 to 305; these read KKSS…GDIQ and SYQT…RSSN. Phosphothreonine is present on Thr258. Ser261, Ser262, Ser271, and Ser322 each carry phosphoserine. The tract at residues 327 to 351 is disordered; that stretch reads QDAFQSKSPSPMPPEAPNQLSNGFS. Thr425 carries the phosphothreonine modification. 3 disordered regions span residues 428-470, 490-513, and 563-755; these read RRKE…TRPG, DTQR…TTPC, and QAKR…PRFS. Over residues 443 to 453 the composition is skewed to low complexity; the sequence is TTASGPPAAAE. Residue Thr603 is modified to Phosphothreonine. Residues 608–623 are compositionally biased toward low complexity; that stretch reads PIPIKTPVIPVKTPTV. 2 positions are modified to phosphoserine: Ser644 and Ser647. Positions 656-671 are enriched in polar residues; it reads GVTSMPSSMWSGQASV. The WH2 domain maps to 727 to 744; it reads QGEDMLNAIRRGVKLKKT.

Belongs to the MTSS family. In terms of assembly, binds to actin. Binds to the cytoplasmic domain of receptor protein tyrosine phosphatase delta. Expressed in many tissues, including spleen, thymus, prostate, testis, uterus, colon, and peripheral blood.

The protein localises to the cytoplasm. It localises to the cytoskeleton. In terms of biological role, may be related to cancer progression or tumor metastasis in a variety of organ sites, most likely through an interaction with the actin cytoskeleton. The sequence is that of Protein MTSS 1 from Homo sapiens (Human).